The following is a 143-amino-acid chain: Mini-ribonuclease 3 (143 aa).

The active site involves D23.

This sequence belongs to the MrnC RNase family. Homodimer. Requires Mg(2+) as cofactor.

It is found in the cytoplasm. Involved in correct processing of both the 5' and 3' ends of 23S rRNA precursor. Processes 30S rRNA precursor transcript even in absence of ribonuclease 3 (Rnc); Rnc processes 30S rRNA into smaller rRNA precursors. Cleaves more efficiently on assembled 50S ribosomal subunits. Cleavage is strongly stimulated by ribosomal protein L3 (RplC); 20-30% DMSO can replace RplC, suggesting RplC may alter rRNA conformation. This chain is Mini-ribonuclease 3 (mrnC), found in Bacillus subtilis (strain 168).